A 496-amino-acid chain; its full sequence is Acetyl-coenzyme A carboxylase carboxyl transferase subunit beta, chloroplastic (496 aa).

The 268-residue stretch at 229–496 (LWVQCENCYG…FFPLNKNFIK (268 aa)) folds into the CoA carboxyltransferase N-terminal domain. Zn(2+)-binding residues include cysteine 233, cysteine 236, cysteine 252, and cysteine 255. Residues 233–255 (CENCYGLNYKKFFRLKLHICEQC) form a C4-type zinc finger.

The protein belongs to the AccD/PCCB family. Acetyl-CoA carboxylase is a heterohexamer composed of biotin carboxyl carrier protein, biotin carboxylase and 2 subunits each of ACCase subunit alpha and ACCase plastid-coded subunit beta (accD). Requires Zn(2+) as cofactor.

The protein resides in the plastid. It is found in the chloroplast stroma. The catalysed reaction is N(6)-carboxybiotinyl-L-lysyl-[protein] + acetyl-CoA = N(6)-biotinyl-L-lysyl-[protein] + malonyl-CoA. It participates in lipid metabolism; malonyl-CoA biosynthesis; malonyl-CoA from acetyl-CoA: step 1/1. Its function is as follows. Component of the acetyl coenzyme A carboxylase (ACC) complex. Biotin carboxylase (BC) catalyzes the carboxylation of biotin on its carrier protein (BCCP) and then the CO(2) group is transferred by the transcarboxylase to acetyl-CoA to form malonyl-CoA. The chain is Acetyl-coenzyme A carboxylase carboxyl transferase subunit beta, chloroplastic from Ranunculus macranthus (Large buttercup).